Here is a 510-residue protein sequence, read N- to C-terminus: NKAP family protein (510 aa).

The span at 1 to 22 (MSHRERDRDRDRDSDRDRDRNR) shows a compositional bias: basic and acidic residues. Disordered regions lie at residues 1-128 (MSHR…VEIQ), 149-220 (ERKD…NYNG), and 239-401 (VYER…PISE). Over residues 23–39 (YSRSRSRGSRSRSRSRS) the composition is skewed to basic residues. The segment covering 40–89 (RSRDRNRNRDYNKDRSSNRDSYYNDRDYKKDRSSNRDRDYYDRDRNRDYK) has biased composition (basic and acidic residues). Over residues 96-105 (SSGGGGGGSG) the composition is skewed to gly residues. Low complexity-rich tracts occupy residues 112–123 (SSSYRESNSNNS) and 184–219 (NNNN…SNYN). Positions 262 to 273 (NKKKSKKSRRKS) are enriched in basic residues. A compositionally biased stretch (low complexity) spans 274 to 283 (SSNSDSSSSD). The span at 292 to 322 (REKRKKSKSRKDKKKRKEKKKHQRKSSKRSS) shows a compositional bias: basic residues. Residues 342–351 (DSDRSDSEGR) are compositionally biased toward basic and acidic residues. Residues 352–367 (SRKKRSKKRSKKRHDH) are compositionally biased toward basic residues. Over residues 368–383 (HKESVHDASMWEEKVE) the composition is skewed to basic and acidic residues.

This sequence belongs to the NKAP family.

The polypeptide is NKAP family protein (Dictyostelium discoideum (Social amoeba)).